A 452-amino-acid polypeptide reads, in one-letter code: UDP-N-acetylmuramoylalanine--D-glutamate ligase (452 aa).

An ATP-binding site is contributed by 115 to 121; sequence GTNGKTT.

The protein belongs to the MurCDEF family.

Its subcellular location is the cytoplasm. It carries out the reaction UDP-N-acetyl-alpha-D-muramoyl-L-alanine + D-glutamate + ATP = UDP-N-acetyl-alpha-D-muramoyl-L-alanyl-D-glutamate + ADP + phosphate + H(+). It participates in cell wall biogenesis; peptidoglycan biosynthesis. Its function is as follows. Cell wall formation. Catalyzes the addition of glutamate to the nucleotide precursor UDP-N-acetylmuramoyl-L-alanine (UMA). The chain is UDP-N-acetylmuramoylalanine--D-glutamate ligase from Geobacter sp. (strain M21).